We begin with the raw amino-acid sequence, 500 residues long: Aspartyl/glutamyl-tRNA(Asn/Gln) amidotransferase subunit B (500 aa).

This sequence belongs to the GatB/GatE family. GatB subfamily. In terms of assembly, heterotrimer of A, B and C subunits.

It carries out the reaction L-glutamyl-tRNA(Gln) + L-glutamine + ATP + H2O = L-glutaminyl-tRNA(Gln) + L-glutamate + ADP + phosphate + H(+). It catalyses the reaction L-aspartyl-tRNA(Asn) + L-glutamine + ATP + H2O = L-asparaginyl-tRNA(Asn) + L-glutamate + ADP + phosphate + 2 H(+). Its function is as follows. Allows the formation of correctly charged Asn-tRNA(Asn) or Gln-tRNA(Gln) through the transamidation of misacylated Asp-tRNA(Asn) or Glu-tRNA(Gln) in organisms which lack either or both of asparaginyl-tRNA or glutaminyl-tRNA synthetases. The reaction takes place in the presence of glutamine and ATP through an activated phospho-Asp-tRNA(Asn) or phospho-Glu-tRNA(Gln). The protein is Aspartyl/glutamyl-tRNA(Asn/Gln) amidotransferase subunit B of Sinorhizobium fredii (strain NBRC 101917 / NGR234).